The following is a 514-amino-acid chain: Peptide chain release factor 3 (514 aa).

The tr-type G domain maps to 8–268 (KKRRTFAIIS…TFLKFAPEPH (261 aa)). GTP is bound by residues 17–24 (SHPDAGKT), 85–89 (DTPGH), and 139–142 (NKLD).

It belongs to the TRAFAC class translation factor GTPase superfamily. Classic translation factor GTPase family. PrfC subfamily.

It is found in the cytoplasm. In terms of biological role, increases the formation of ribosomal termination complexes and stimulates activities of RF-1 and RF-2. It binds guanine nucleotides and has strong preference for UGA stop codons. It may interact directly with the ribosome. The stimulation of RF-1 and RF-2 is significantly reduced by GTP and GDP, but not by GMP. This Streptococcus gordonii (strain Challis / ATCC 35105 / BCRC 15272 / CH1 / DL1 / V288) protein is Peptide chain release factor 3.